The chain runs to 234 residues: Adenosine 5'-phosphosulfate reductase (234 aa).

C120, C121, C203, and C206 together coordinate [4Fe-4S] cluster. Residue C229 is the Nucleophile; cysteine thiosulfonate intermediate of the active site.

It belongs to the PAPS reductase family. CysH subfamily. The cofactor is [4Fe-4S] cluster.

The protein resides in the cytoplasm. It carries out the reaction [thioredoxin]-disulfide + sulfite + AMP + 2 H(+) = adenosine 5'-phosphosulfate + [thioredoxin]-dithiol. The protein operates within sulfur metabolism; hydrogen sulfide biosynthesis; sulfite from sulfate. Catalyzes the formation of sulfite from adenosine 5'-phosphosulfate (APS) using thioredoxin as an electron donor. The protein is Adenosine 5'-phosphosulfate reductase of Bacillus cereus (strain ATCC 14579 / DSM 31 / CCUG 7414 / JCM 2152 / NBRC 15305 / NCIMB 9373 / NCTC 2599 / NRRL B-3711).